We begin with the raw amino-acid sequence, 452 residues long: CUGBP Elav-like family member 3 (452 aa).

RRM domains lie at 7 to 88 (IKLF…PADS), 94 to 174 (RKLF…FADT), and 367 to 445 (CNIF…LKRP).

The protein belongs to the CELF/BRUNOL family.

It localises to the nucleus. The protein resides in the cytoplasm. In terms of biological role, RNA-binding protein that may be involved in the regulation of pre-mRNA alternative splicing. This chain is CUGBP Elav-like family member 3 (celf3), found in Danio rerio (Zebrafish).